A 325-amino-acid polypeptide reads, in one-letter code: Cytochrome f (325 aa).

An N-terminal signal peptide occupies residues 1–40 (MSKINLSTMWSSFIKKIAKTILVAIACISLFLTSSPAANA). Positions 41, 62, 65, and 66 each coordinate heme. The helical transmembrane segment at 291 to 311 (VKWLMAFFALVMLAQIMLVLK) threads the bilayer.

This sequence belongs to the cytochrome f family. In terms of assembly, the 4 large subunits of the cytochrome b6-f complex are cytochrome b6, subunit IV (17 kDa polypeptide, PetD), cytochrome f and the Rieske protein, while the 4 small subunits are PetG, PetL, PetM and PetN. The complex functions as a dimer. Heme is required as a cofactor.

The protein resides in the cellular thylakoid membrane. Functionally, component of the cytochrome b6-f complex, which mediates electron transfer between photosystem II (PSII) and photosystem I (PSI), cyclic electron flow around PSI, and state transitions. This Trichodesmium erythraeum (strain IMS101) protein is Cytochrome f.